Consider the following 339-residue polypeptide: D-erythrose-4-phosphate dehydrogenase (339 aa).

Residue 11–12 (RI) participates in NAD(+) binding. Residues 158–160 (SCT), arginine 204, 217–218 (TK), and arginine 240 each bind substrate. The active-site Nucleophile is cysteine 159. Position 322 (asparagine 322) interacts with NAD(+).

It belongs to the glyceraldehyde-3-phosphate dehydrogenase family. Epd subfamily. In terms of assembly, homotetramer.

It is found in the cytoplasm. The enzyme catalyses D-erythrose 4-phosphate + NAD(+) + H2O = 4-phospho-D-erythronate + NADH + 2 H(+). It participates in cofactor biosynthesis; pyridoxine 5'-phosphate biosynthesis; pyridoxine 5'-phosphate from D-erythrose 4-phosphate: step 1/5. Its function is as follows. Catalyzes the NAD-dependent conversion of D-erythrose 4-phosphate to 4-phosphoerythronate. The sequence is that of D-erythrose-4-phosphate dehydrogenase from Aliivibrio salmonicida (strain LFI1238) (Vibrio salmonicida (strain LFI1238)).